We begin with the raw amino-acid sequence, 238 residues long: Large ribosomal subunit protein uL1 (238 aa).

The protein belongs to the universal ribosomal protein uL1 family. Part of the 50S ribosomal subunit.

Binds directly to 23S rRNA. The L1 stalk is quite mobile in the ribosome, and is involved in E site tRNA release. In terms of biological role, protein L1 is also a translational repressor protein, it controls the translation of the L11 operon by binding to its mRNA. This is Large ribosomal subunit protein uL1 from Salinispora tropica (strain ATCC BAA-916 / DSM 44818 / JCM 13857 / NBRC 105044 / CNB-440).